A 66-amino-acid polypeptide reads, in one-letter code: Toxin BeM14 (66 aa).

Positions 2-66 (RDAYIADDRN…IRKIPGEECR (65 aa)) constitute an LCN-type CS-alpha/beta domain. 4 disulfide bridges follow: cysteine 12–cysteine 65, cysteine 16–cysteine 36, cysteine 22–cysteine 46, and cysteine 26–cysteine 48.

This sequence belongs to the long (4 C-C) scorpion toxin superfamily. Sodium channel inhibitor family. Alpha subfamily. In terms of tissue distribution, expressed by the venom gland.

The protein localises to the secreted. Its function is as follows. Alpha toxins bind voltage-independently at site-3 of sodium channels (Nav) and inhibit the inactivation of the activated channels, thereby blocking neuronal transmission. Has paralytic activity in mice. The polypeptide is Toxin BeM14 (Mesobuthus eupeus (Lesser Asian scorpion)).